The sequence spans 205 residues: Keratin-associated protein 4-6 (205 aa).

Tandem repeats lie at residues 20–24, 25–29, 30–34, 35–39, 40–44, 45–49, 50–54, 55–59, 60–64, 65–68, 69–73, 74–78, 79–83, 84–88, 89–93, 94–98, 99–103, 104–108, 114–118, 119–123, 124–128, 129–133, 134–138, 139–143, 144–148, 149–153, 154–158, 159–163, 164–168, and 169–173. Residues 20–173 form a 30 X 5 AA repeats of C-C-[IRQVEL]-[SPTR]-[STVQRCP] region; that stretch reads CCRPSCCQTT…CCRPCCCLRP (154 aa).

Belongs to the KRTAP type 4 family. In terms of assembly, interacts with hair keratins. Expressed in the hair follicles.

In the hair cortex, hair keratin intermediate filaments are embedded in an interfilamentous matrix, consisting of hair keratin-associated proteins (KRTAP), which are essential for the formation of a rigid and resistant hair shaft through their extensive disulfide bond cross-linking with abundant cysteine residues of hair keratins. The matrix proteins include the high-sulfur and high-glycine-tyrosine keratins. The chain is Keratin-associated protein 4-6 (KRTAP4-6) from Homo sapiens (Human).